The primary structure comprises 220 residues: Aklanonic acid methyltransferase DauC (220 aa).

It belongs to the methyltransferase superfamily. DnrC family. Homodimer.

The enzyme catalyses aklanonate + S-adenosyl-L-methionine = methyl aklanonate + S-adenosyl-L-homocysteine. Its pathway is antibiotic biosynthesis; daunorubicin biosynthesis. It participates in antibiotic biosynthesis; carminomycin biosynthesis. The protein operates within antibiotic biosynthesis; rhodomycin biosynthesis. It functions in the pathway antibiotic biosynthesis; aclacinomycin biosynthesis. Its function is as follows. Involved in the biosynthesis of aklavinone which is an important precursor common to the formation of the clinically significant anthracyclines such as carminomycin, daunorubicin (daunomycin), rhodomycin, aclacinomycin T (aklavin) and aclacinomycin A (aclarubicin). These compounds are aromatic polyketide antibiotics that exhibit high cytotoxicity and are widely applied in the chemotherapy of a variety of cancers. Catalyzes the methyl esterification of aklanonic acid to yield aklanonic acid methyl ester. This Streptomyces sp. (strain C5) protein is Aklanonic acid methyltransferase DauC (dauC).